The sequence spans 205 residues: MPIFFYLFTTLIIISSLCVVLSKNSVYSVLWLIFAFINGSGLMILLGAEFLAMMLIVIYVGAVAVLFLFVIMMLDMHFNKAIMQLKEKPILSIFVSLIMFADLVVIILLGTKNIHFSSDLSFAIASDVSNTKAIGKILYTDFMIPFQIAGLILFVAMIGCITLTLRKRDGVKRQNIAKQLSHNKENAVLMTKPLINKGIENIKYE.

Transmembrane regions (helical) follow at residues Met1 to Leu21, Val26 to Leu46, Met54 to Leu74, Pro89 to Leu109, and Phe142 to Thr162.

This sequence belongs to the complex I subunit 6 family.

The protein localises to the cell membrane. It catalyses the reaction a quinone + NADH + 5 H(+)(in) = a quinol + NAD(+) + 4 H(+)(out). Its function is as follows. NDH-1 shuttles electrons from NADH, via FMN and iron-sulfur (Fe-S) centers, to quinones in the respiratory chain. Couples the redox reaction to proton translocation (for every two electrons transferred, four hydrogen ions are translocated across the cytoplasmic membrane), and thus conserves the redox energy in a proton gradient. This Rickettsia bellii (strain RML369-C) protein is NADH-quinone oxidoreductase subunit J (nuoJ).